The primary structure comprises 411 residues: Bifunctional protein GlmU (411 aa).

Residues 1-204 (MDAIILCAGK…NGKLHGIELN (204 aa)) form a pyrophosphorylase region. Residues 6–9 (LCAG), Gln74, and Gly79 each bind UTP. N-acetyl-alpha-D-glucosamine 1-phosphate-binding residues include Thr80, Gly130, Asn142, and Asn158. Residues 205 to 224 (GYWNDIGHPWDVLSANNRFL) form a linker region. Positions 225 to 411 (NKIISKVSGK…DELVITKKRN (187 aa)) are N-acetyltransferase. The active-site Proton acceptor is the His308. Residues Ala384 and Lys401 each contribute to the acetyl-CoA site.

The protein in the N-terminal section; belongs to the N-acetylglucosamine-1-phosphate uridyltransferase family. This sequence in the C-terminal section; belongs to the transferase hexapeptide repeat family.

It carries out the reaction N-acetyl-alpha-D-glucosamine 1-phosphate + UTP + H(+) = UDP-N-acetyl-alpha-D-glucosamine + diphosphate. The enzyme catalyses alpha-D-glucosamine 1-phosphate + acetyl-CoA = N-acetyl-alpha-D-glucosamine 1-phosphate + CoA + H(+). It functions in the pathway nucleotide-sugar biosynthesis; UDP-N-acetyl-alpha-D-glucosamine biosynthesis; N-acetyl-alpha-D-glucosamine 1-phosphate from alpha-D-glucosamine 6-phosphate (route II): step 2/2. The protein operates within nucleotide-sugar biosynthesis; UDP-N-acetyl-alpha-D-glucosamine biosynthesis; UDP-N-acetyl-alpha-D-glucosamine from N-acetyl-alpha-D-glucosamine 1-phosphate: step 1/1. Catalyzes the last two sequential reactions in the de novo biosynthetic pathway for UDP-N-acetyl-glucosamine (UDP-GlcNAc). Responsible for the acetylation of GlcN-1-P to GlcNAc-1-P, and for the uridyl transfer from UTP to GlcNAc-1-P, to produce UDP-GlcNAc and pyrophosphate. This is Bifunctional protein GlmU from Methanococcus maripaludis (strain C7 / ATCC BAA-1331).